The chain runs to 264 residues: Synaptophysin-like protein 2 (264 aa).

At 1 to 33 (MSSTESPGRTSDKSPRQQVDRLLLGLRWQRLEE) the chain is on the cytoplasmic side. In terms of domain architecture, MARVEL spans 30 to 238 (RLEEPLGFIK…NCWFVFKETP (209 aa)). Residues 34 to 54 (PLGFIKVLQWLFAIFAFGSCG) form a helical membrane-spanning segment. The Vesicular portion of the chain corresponds to 55 to 116 (SYSGETGALV…LMGDFSAPAE (62 aa)). The helical transmembrane segment at 117-137 (FFVTLGIFSFFYTMAALVIYL) threads the bilayer. At 138–150 (RFHKLYTENKRFP) the chain is on the cytoplasmic side. Residues 151-171 (LVDFCVTVSFTFFWLVAAAAW) form a helical membrane-spanning segment. At 172–213 (GKGLTDVKGATRPSSLTAAMSVCHGEEAVCSAGATPSMGLAN) the chain is on the vesicular side. Asparagine 213 carries an N-linked (GlcNAc...) asparagine glycan. Residues 214–234 (LSVLFGFINFFLWAGNCWFVF) traverse the membrane as a helical segment. Topologically, residues 235 to 264 (KETPWHGQGQDQGQGPSQESAAEQGAVEKQ) are cytoplasmic. The segment at 242 to 264 (QGQDQGQGPSQESAAEQGAVEKQ) is disordered.

Belongs to the synaptophysin/synaptobrevin family. As to expression, expressed abundantly in skeletal muscle and at lower levels in the kidney.

Its subcellular location is the membrane. Its function is as follows. Involved in communication between the T-tubular and junctional sarcoplasmic reticulum (SR) membranes. The protein is Synaptophysin-like protein 2 (Sypl2) of Mus musculus (Mouse).